Consider the following 84-residue polypeptide: Large ribosomal subunit protein bL31 (84 aa).

Zn(2+) contacts are provided by Cys16, Cys18, Cys38, and Cys41.

The protein belongs to the bacterial ribosomal protein bL31 family. Type A subfamily. In terms of assembly, part of the 50S ribosomal subunit. The cofactor is Zn(2+).

Its function is as follows. Binds the 23S rRNA. In Mycobacterium leprae (strain Br4923), this protein is Large ribosomal subunit protein bL31.